The sequence spans 172 residues: Iron-sulfur cluster assembly protein SufA (172 aa).

Positions 1-19 (MFINIFLFLFAATINISSS) are cleaved as a signal peptide. The [4Fe-4S] cluster site is built by cysteine 96, cysteine 164, and cysteine 166.

It belongs to the HesB/IscA family. Homodimer.

The protein localises to the plastid. Its subcellular location is the apicoplast. It participates in cofactor biosynthesis; iron-sulfur cluster biosynthesis. Functionally, participates in the sulfur mobilization (SUF) pathway for iron-sulfur (Fe-S) cluster biogenesis. Involved in the pre-assembly of [4Fe-4S] clusters and their transfer to target proteins. The polypeptide is Iron-sulfur cluster assembly protein SufA (Plasmodium berghei (strain Anka)).